The following is a 399-amino-acid chain: Glucose-1-phosphate adenylyltransferase (399 aa).

Alpha-D-glucose 1-phosphate is bound by residues Gly-158, 174 to 175, and Ser-192; that span reads EK.

The protein belongs to the bacterial/plant glucose-1-phosphate adenylyltransferase family. In terms of assembly, homotetramer.

The catalysed reaction is alpha-D-glucose 1-phosphate + ATP + H(+) = ADP-alpha-D-glucose + diphosphate. It functions in the pathway glycan biosynthesis; glycogen biosynthesis. Functionally, involved in the biosynthesis of ADP-glucose, a building block required for the elongation reactions to produce glycogen. Catalyzes the reaction between ATP and alpha-D-glucose 1-phosphate (G1P) to produce pyrophosphate and ADP-Glc. The chain is Glucose-1-phosphate adenylyltransferase from Streptomyces coelicolor (strain ATCC BAA-471 / A3(2) / M145).